A 300-amino-acid chain; its full sequence is Junctional adhesion molecule A (300 aa).

Residues 1–26 (MGTEGKAGRKLLFLFTSMILGSLVQG) form the signal peptide. At 27–238 (KGSVYTAQSD…MDAVELNVGG (212 aa)) the chain is on the extracellular side. 2 Ig-like V-type domains span residues 28 to 122 (GSVY…GEVS) and 134 to 230 (PTIS…AHMD). The N-linked (GlcNAc...) asparagine glycan is linked to Asn-42. Intrachain disulfides connect Cys-49/Cys-108 and Cys-152/Cys-212. The N-linked (GlcNAc...) asparagine glycan is linked to Asn-185. A helical transmembrane segment spans residues 239-259 (IVAAVLVTLILLGLLIFGVWF). Over 260–299 (AYSRGYFERTKKGTAPGKKVIYSQPSTRSEGEFKQTSSFL) the chain is Cytoplasmic. Residues Ser-282, Ser-285, and Ser-288 each carry the phosphoserine modification.

The protein belongs to the immunoglobulin superfamily. As to quaternary structure, interacts with the ninth PDZ domain of MPDZ. Interacts with the first PDZ domain of PARD3. The association between PARD3 and PARD6B probably disrupts this interaction. Interacts with ITGAL (via I-domain). Interacts with CD151.

It is found in the cell junction. The protein resides in the tight junction. The protein localises to the cell membrane. In terms of biological role, seems to play a role in epithelial tight junction formation. Appears early in primordial forms of cell junctions and recruits PARD3. The association of the PARD6-PARD3 complex may prevent the interaction of PARD3 with JAM1, thereby preventing tight junction assembly. Plays a role in regulating monocyte transmigration involved in integrity of epithelial barrier. Ligand for integrin alpha-L/beta-2 involved in memory T-cell and neutrophil transmigration. Involved in platelet activation. This Mus musculus (Mouse) protein is Junctional adhesion molecule A (F11r).